The sequence spans 124 residues: Chemotaxis protein CheY1 (124 aa).

Residues 2 to 120 (KLLVVDDSST…VLKEKLEVVL (119 aa)) enclose the Response regulatory domain. Mg(2+) contacts are provided by D7, D8, D53, and N55. 4-aspartylphosphate is present on D53.

Interacts (when phosphorylated) with FliM. Requires Mg(2+) as cofactor. Phosphorylated by CheAY. Dephosphorylated (inactivated) by CheZ.

It is found in the cytoplasm. Its function is as follows. Chemotactic response regulator protein that modulates the rotation direction of bacterial flagellar motors. Plays an important role in the colonization and infection of Helicobacter pylori. Upon phosphorylation by CheA, interacts with the flagellar motor protein FliM to cause clockwise flagellar rotation and bacterial reversals, as opposed to straight swimming when CheY1 is not phosphorylated. This is Chemotaxis protein CheY1 from Helicobacter pylori (strain ATCC 700392 / 26695) (Campylobacter pylori).